The following is a 226-amino-acid chain: Thymidylate kinase (226 aa).

16–23 lines the ATP pocket; it reads GIDGAGKT.

Belongs to the thymidylate kinase family.

The catalysed reaction is dTMP + ATP = dTDP + ADP. Functionally, phosphorylation of dTMP to form dTDP in both de novo and salvage pathways of dTTP synthesis. This is Thymidylate kinase from Xanthomonas euvesicatoria pv. vesicatoria (strain 85-10) (Xanthomonas campestris pv. vesicatoria).